The following is a 1317-amino-acid chain: ABC transporter C family member 14 (1317 aa).

An ABC transmembrane type-1 1 domain is found at 119 to 404 (NKYALISNIF…LPEDIYKAIG (286 aa)). The next 5 membrane-spanning stretches (helical) occupy residues 127-147 (IFIT…INYI), 156-176 (SILK…GQSI), 249-269 (ILIL…VGFG), 341-361 (VLFW…VLVS), and 375-395 (LDVT…LIYL). The interval 426–451 (ENNQNINFNNNNNNNNNNKNNNNNDD) is disordered. Positions 427 to 449 (NNQNINFNNNNNNNNNNKNNNNN) are enriched in low complexity. The ABC transporter 1 domain maps to 490 to 710 (ENEENIKINE…ISDKNDPNLI (221 aa)). 522–529 (GVVGSGKT) is an ATP binding site. Transmembrane regions (helical) follow at residues 734–754 (YFSY…FFIG), 778–798 (DSFY…LLMI), 871–891 (LISI…LFII), 969–989 (LEVM…LFTS), and 992–1012 (GLAA…SWGV). Positions 744-1027 (LFITISLFFI…LEVKMNSFQR (284 aa)) constitute an ABC transmembrane type-1 2 domain. Positions 1071–1306 (IEFKNVEIKY…PNSKFNKLIK (236 aa)) constitute an ABC transporter 2 domain. Position 1105 to 1112 (1105 to 1112 (GRTGAGKT)) interacts with ATP.

Belongs to the ABC transporter superfamily. ABCC family. Conjugate transporter (TC 3.A.1.208) subfamily.

The protein resides in the membrane. The chain is ABC transporter C family member 14 (abcC14) from Dictyostelium discoideum (Social amoeba).